Reading from the N-terminus, the 91-residue chain is MASVSISCPSCSATDGVVRNGKSTAGHQRYLCSHCRKTWQLQFTYTASQPGTHQKIIDMAMNGVGCRATARIMGVGLNTILRHLKNSGRSR.

It belongs to the IS1 elements InsA family.

Functionally, absolutely required for transposition of IS1. This Escherichia coli (strain K12) protein is Insertion element IS1 1 protein InsA (insA1).